Reading from the N-terminus, the 313-residue chain is Methionyl-tRNA formyltransferase (313 aa).

S113–P116 is a binding site for (6S)-5,6,7,8-tetrahydrofolate.

Belongs to the Fmt family.

It carries out the reaction L-methionyl-tRNA(fMet) + (6R)-10-formyltetrahydrofolate = N-formyl-L-methionyl-tRNA(fMet) + (6S)-5,6,7,8-tetrahydrofolate + H(+). In terms of biological role, attaches a formyl group to the free amino group of methionyl-tRNA(fMet). The formyl group appears to play a dual role in the initiator identity of N-formylmethionyl-tRNA by promoting its recognition by IF2 and preventing the misappropriation of this tRNA by the elongation apparatus. The chain is Methionyl-tRNA formyltransferase from Francisella tularensis subsp. holarctica (strain FTNF002-00 / FTA).